The chain runs to 452 residues: Probable carboxypeptidase ACLA_088580 (452 aa).

Positions 1–18 (MRSLTLLLSLSTALRSVA) are cleaved as a signal peptide. N107 and N156 each carry an N-linked (GlcNAc...) asparagine glycan. D175 is a Zn(2+) binding site. E207 functions as the Proton acceptor in the catalytic mechanism. Residue E208 coordinates Zn(2+).

Belongs to the peptidase M20A family. It depends on Zn(2+) as a cofactor.

It localises to the secreted. The polypeptide is Probable carboxypeptidase ACLA_088580 (Aspergillus clavatus (strain ATCC 1007 / CBS 513.65 / DSM 816 / NCTC 3887 / NRRL 1 / QM 1276 / 107)).